We begin with the raw amino-acid sequence, 429 residues long: UDP-N-acetylglucosamine 1-carboxyvinyltransferase (429 aa).

A phosphoenolpyruvate-binding site is contributed by 22–23 (KN). Residue R102 participates in UDP-N-acetyl-alpha-D-glucosamine binding. The Proton donor role is filled by C126. Position 126 is a 2-(S-cysteinyl)pyruvic acid O-phosphothioketal (C126). Residues 131-135 (RPVDL), D316, and I338 contribute to the UDP-N-acetyl-alpha-D-glucosamine site.

Belongs to the EPSP synthase family. MurA subfamily.

The protein localises to the cytoplasm. It carries out the reaction phosphoenolpyruvate + UDP-N-acetyl-alpha-D-glucosamine = UDP-N-acetyl-3-O-(1-carboxyvinyl)-alpha-D-glucosamine + phosphate. It functions in the pathway cell wall biogenesis; peptidoglycan biosynthesis. Functionally, cell wall formation. Adds enolpyruvyl to UDP-N-acetylglucosamine. The protein is UDP-N-acetylglucosamine 1-carboxyvinyltransferase of Methylobacterium sp. (strain 4-46).